Here is a 422-residue protein sequence, read N- to C-terminus: Dioxygenase str8 (422 aa).

Positions 73, 75, 78, and 119 each coordinate Zn(2+). 3 residues coordinate Fe cation: H243, D245, and H382.

Belongs to the gamma-BBH/TMLD family. Fe(2+) is required as a cofactor.

It participates in mycotoxin biosynthesis. Its function is as follows. Dioxygenase; part of the gene cluster that mediates the biosynthesis of strobilurin A, an antifungal polyketide that contains a key beta-methoxyacrylate toxophore that targets the complex III of the mitochondrial electron transport chain. Strobilurin biosynthesis begins with construction of benzoyl CoA by step-wise elimination of ammonia from phenylalanine by the phenylalanine ammonia-lyase str11, oxygenation by str8 and retro-Claisen reaction to form benzoic acid, which is activated to its CoA thiolester benzoyl CoA by the dedicated CoA ligase str10. Benzoyl CoA forms the starter unit for the highly reducing polyketide synthase stpks1 that produces the polyketide prestrobilutin A. The FAD-dependent oxygenase str9 then catalyzes the key oxidative rearrangement responsible for the creation of the beta-methoxyacrylate toxophore. Str9 performs epoxidation of the 2,3 olefin of prestrobilutin A, followed by Meinwald rearrangement to furnish the aldehyde intermediate. Rapid enolization of the aldehyde intermediate would give the beta-methoxyacrylate skeleton and methylations catalyzed by str2 and str3 complete the synthesis and lead to the production of strobilurin A. The short-chain dehydrogenase stl2 and the dehydrogenase str4 play a role in the shunt pathway leading to the production of bolineol. The cluster encodes no obvious halogenase gene that could be involved in production of strobilurin B, nor any obvious dimethylallyl-transferase that could be involved in the production of strobilurin G. It is possible that unknown proteins encoded in, or near, the cluster (such as str1 or stl1) may form new classes of halogenases or dimethylally-transferases, or that the responsible genes are located elsewhere on the genome. Similarly, proteins encoded by str5/str6 hydrolases appear to have no chemical role in the biosynthesis of strobilurin A. Finally, no obvious self-resistance gene is found within the cluster. The sequence is that of Dioxygenase str8 from Strobilurus tenacellus.